The sequence spans 1393 residues: DNA-directed RNA polymerase subunit beta' (1393 aa).

Residues Cys-70, Cys-72, Cys-85, and Cys-88 each contribute to the Zn(2+) site. Mg(2+) contacts are provided by Asp-461, Asp-463, and Asp-465. Zn(2+) contacts are provided by Cys-815, Cys-889, Cys-896, and Cys-899.

It belongs to the RNA polymerase beta' chain family. As to quaternary structure, the RNAP catalytic core consists of 2 alpha, 1 beta, 1 beta' and 1 omega subunit. When a sigma factor is associated with the core the holoenzyme is formed, which can initiate transcription. The cofactor is Mg(2+). Zn(2+) is required as a cofactor.

It catalyses the reaction RNA(n) + a ribonucleoside 5'-triphosphate = RNA(n+1) + diphosphate. Its function is as follows. DNA-dependent RNA polymerase catalyzes the transcription of DNA into RNA using the four ribonucleoside triphosphates as substrates. The chain is DNA-directed RNA polymerase subunit beta' from Vesicomyosocius okutanii subsp. Calyptogena okutanii (strain HA).